Consider the following 207-residue polypeptide: Segregation and condensation protein B (207 aa).

Belongs to the ScpB family. In terms of assembly, homodimer. Homodimerization may be required to stabilize the binding of ScpA to the Smc head domains. Component of a cohesin-like complex composed of ScpA, ScpB and the Smc homodimer, in which ScpA and ScpB bind to the head domain of Smc. The presence of the three proteins is required for the association of the complex with DNA.

Its subcellular location is the cytoplasm. Participates in chromosomal partition during cell division. May act via the formation of a condensin-like complex containing Smc and ScpA that pull DNA away from mid-cell into both cell halves. This chain is Segregation and condensation protein B, found in Mycoplasma genitalium (strain ATCC 33530 / DSM 19775 / NCTC 10195 / G37) (Mycoplasmoides genitalium).